The sequence spans 510 residues: Inositol-3-phosphate synthase (510 aa).

NAD(+) contacts are provided by glycine 70, glycine 71, asparagine 72, asparagine 73, aspartate 143, isoleucine 180, glutamine 190, arginine 193, threonine 230, alanine 231, asparagine 232, threonine 233, glycine 281, serine 282, aspartate 306, serine 309, asparagine 340, asparagine 341, aspartate 342, lysine 355, glycine 393, aspartate 394, aspartate 422, and serine 423.

Belongs to the myo-inositol 1-phosphate synthase family. It depends on NAD(+) as a cofactor.

It is found in the cytoplasm. Its subcellular location is the cytosol. The protein localises to the nucleus. It carries out the reaction D-glucose 6-phosphate = 1D-myo-inositol 3-phosphate. It functions in the pathway polyol metabolism; myo-inositol biosynthesis; myo-inositol from D-glucose 6-phosphate: step 1/2. Functionally, key enzyme in myo-inositol biosynthesis pathway that catalyzes the conversion of glucose 6-phosphate to 1-myo-inositol 1-phosphate in a NAD-dependent manner. The protein is Inositol-3-phosphate synthase (TUR1) of Spirodela polyrhiza (Giant duckweed).